The following is a 132-amino-acid chain: RING-H2 finger protein ATL39 (132 aa).

A helical membrane pass occupies residues 10 to 30 (TIVFAFASIGFIAFYIINYYI). The RING-type; atypical zinc finger occupies 85–127 (CVVCLNEFKDDETLRLVPPCVHVFHADCVDIWLSHSSTCPICR).

This sequence belongs to the RING-type zinc finger family. ATL subfamily.

Its subcellular location is the membrane. It catalyses the reaction S-ubiquitinyl-[E2 ubiquitin-conjugating enzyme]-L-cysteine + [acceptor protein]-L-lysine = [E2 ubiquitin-conjugating enzyme]-L-cysteine + N(6)-ubiquitinyl-[acceptor protein]-L-lysine.. Its pathway is protein modification; protein ubiquitination. The sequence is that of RING-H2 finger protein ATL39 (ATL39) from Arabidopsis thaliana (Mouse-ear cress).